Here is a 289-residue protein sequence, read N- to C-terminus: Ribosomal protein L11 methyltransferase (289 aa).

S-adenosyl-L-methionine-binding residues include T142, G163, D185, and N226.

This sequence belongs to the methyltransferase superfamily. PrmA family.

The protein resides in the cytoplasm. The catalysed reaction is L-lysyl-[protein] + 3 S-adenosyl-L-methionine = N(6),N(6),N(6)-trimethyl-L-lysyl-[protein] + 3 S-adenosyl-L-homocysteine + 3 H(+). In terms of biological role, methylates ribosomal protein L11. The sequence is that of Ribosomal protein L11 methyltransferase from Legionella pneumophila (strain Paris).